Here is a 258-residue protein sequence, read N- to C-terminus: 3-deoxy-manno-octulosonate cytidylyltransferase (258 aa).

The protein belongs to the KdsB family.

It localises to the cytoplasm. It catalyses the reaction 3-deoxy-alpha-D-manno-oct-2-ulosonate + CTP = CMP-3-deoxy-beta-D-manno-octulosonate + diphosphate. The protein operates within nucleotide-sugar biosynthesis; CMP-3-deoxy-D-manno-octulosonate biosynthesis; CMP-3-deoxy-D-manno-octulosonate from 3-deoxy-D-manno-octulosonate and CTP: step 1/1. It participates in bacterial outer membrane biogenesis; lipopolysaccharide biosynthesis. In terms of biological role, activates KDO (a required 8-carbon sugar) for incorporation into bacterial lipopolysaccharide in Gram-negative bacteria. The sequence is that of 3-deoxy-manno-octulosonate cytidylyltransferase from Parvibaculum lavamentivorans (strain DS-1 / DSM 13023 / NCIMB 13966).